We begin with the raw amino-acid sequence, 83 residues long: Retinal cone rhodopsin-sensitive cGMP 3',5'-cyclic phosphodiesterase subunit gamma (83 aa).

A disordered region spans residues 1-54 (MSDSPSLSPPAPSQGPTTPRKGPPKFKQRQTRQFKSKPPKKGVKGFGDDIPGME). A compositionally biased stretch (basic residues) spans 22-43 (GPPKFKQRQTRQFKSKPPKKGV).

The protein belongs to the rod/cone cGMP-PDE gamma subunit family. In terms of assembly, tetramer composed of two catalytic chains (alpha and beta), and two inhibitory chains (gamma).

It carries out the reaction 3',5'-cyclic GMP + H2O = GMP + H(+). In terms of biological role, participates in processes of transmission and amplification of the visual signal. cGMP-PDEs are the effector molecules in G-protein-mediated phototransduction in vertebrate rods and cones. The protein is Retinal cone rhodopsin-sensitive cGMP 3',5'-cyclic phosphodiesterase subunit gamma (Pde6h) of Mus musculus (Mouse).